Reading from the N-terminus, the 401-residue chain is Shugoshin (401 aa).

The stretch at 3 to 49 (SKVEQQYKLLNAELMDQVQKQRLEIGEYRKRVISLEREIMDIREEHV) forms a coiled coil. The disordered stretch occupies residues 82–197 (EPAPAAQINR…VEETQTEQNE (116 aa)). The segment covering 98-108 (SSREICKDMRR) has biased composition (basic and acidic residues). The segment covering 114 to 137 (RTTRPISPRRSSSVTSTVSSTSRR) has biased composition (low complexity). 3 positions are modified to phosphoserine; by AurB: Ser124, Ser125, and Ser126. Acidic residues predominate over residues 171–183 (VFDEDDSDDDFDE). Thr331 is modified (phosphothreonine; by PLK1). The segment at 338–401 (EEMPSIRTRS…GSKGKAKAKK (64 aa)) is disordered. A compositionally biased stretch (polar residues) spans 348–377 (RTAANKKSENTDMSSSFCNNSARPSRSCRP). Positions 387 to 401 (NKLRNGSKGKAKAKK) are enriched in basic residues.

This sequence belongs to the shugoshin family. In terms of assembly, homodimer. Interacts with Incenp. Post-translationally, phosphorylation by polo-like kinase (PLK) on Thr-331 antagonizes cohesive function. Phosphorylation on Thr-331 at the metaphase anaphase transition leads to its dissociation from centromeres. In contrast, phosphorylation by aurB/ial on either Ser-124, Ser-125 or Ser-126 is required for association with centromeres.

The protein localises to the chromosome. It is found in the centromere. Plays a central role in chromosome cohesion during meiosis and mitosis by preventing premature dissociation of cohesin complex from centromeres after prophase, when most of cohesin complex dissociates from chromosomes arms. May act by protecting or Rad21 from cleavage by Sse/separase. Required during meiosis in both males and females. The sequence is that of Shugoshin (mei-S332) from Drosophila melanogaster (Fruit fly).